Reading from the N-terminus, the 137-residue chain is Transcription antitermination protein NusB (137 aa).

The protein belongs to the NusB family.

Involved in transcription antitermination. Required for transcription of ribosomal RNA (rRNA) genes. Binds specifically to the boxA antiterminator sequence of the ribosomal RNA (rrn) operons. This Proteus mirabilis (strain HI4320) protein is Transcription antitermination protein NusB.